The primary structure comprises 122 residues: Large ribosomal subunit protein uL18 (122 aa).

The protein belongs to the universal ribosomal protein uL18 family. Part of the 50S ribosomal subunit; part of the 5S rRNA/L5/L18/L25 subcomplex. Contacts the 5S and 23S rRNAs.

Its function is as follows. This is one of the proteins that bind and probably mediate the attachment of the 5S RNA into the large ribosomal subunit, where it forms part of the central protuberance. This chain is Large ribosomal subunit protein uL18, found in Desulforapulum autotrophicum (strain ATCC 43914 / DSM 3382 / VKM B-1955 / HRM2) (Desulfobacterium autotrophicum).